Here is a 1083-residue protein sequence, read N- to C-terminus: DNA-directed RNA polymerase subunit beta (1083 aa).

It belongs to the RNA polymerase beta chain family. As to quaternary structure, in plastids the minimal PEP RNA polymerase catalytic core is composed of four subunits: alpha, beta, beta', and beta''. When a (nuclear-encoded) sigma factor is associated with the core the holoenzyme is formed, which can initiate transcription.

The protein resides in the plastid. It is found in the chloroplast. It carries out the reaction RNA(n) + a ribonucleoside 5'-triphosphate = RNA(n+1) + diphosphate. Its function is as follows. DNA-dependent RNA polymerase catalyzes the transcription of DNA into RNA using the four ribonucleoside triphosphates as substrates. This chain is DNA-directed RNA polymerase subunit beta, found in Acorus calamus var. americanus (American sweet flag).